Here is a 204-residue protein sequence, read N- to C-terminus: MDRAILLLSVVCLVVSSQPIADSQRLFSIAVSRVQHLHLLAQRLFSDFESSLQTEEQRQLNKIFLQDFCNSDYIISPIDKHETQRSSVLKLLSISYGLVESWEFPSRFLSGGSAPRTQISPKLSELKTGILLLIRANQDPAEIFSDPSAPQVPSYGNYYQSLGADESLRRTYELLACFKKDMHKVETYLTVAKCRLSPEANCTL.

An N-terminal signal peptide occupies residues 1-17; the sequence is MDRAILLLSVVCLVVSS. The residue at position 18 (Q18) is a Pyrrolidone carboxylic acid. H36 contributes to the Zn(2+) binding site. Residues C69 and C177 are joined by a disulfide bond. E186 serves as a coordination point for Zn(2+). Residues C194 and C202 are joined by a disulfide bond.

The protein belongs to the somatotropin/prolactin family.

The protein resides in the secreted. Its function is as follows. Growth hormone plays an important role in growth control and is involved in the regulation of several anabolic processes. Implicated as an osmoregulatory substance important for seawater adaptation. The sequence is that of Somatotropin (gh) from Odontesthes argentinensis (Marine silverside).